The following is a 59-amino-acid chain: Large ribosomal subunit protein uL30 (59 aa).

It belongs to the universal ribosomal protein uL30 family. As to quaternary structure, part of the 50S ribosomal subunit.

This chain is Large ribosomal subunit protein uL30, found in Clostridium botulinum (strain 657 / Type Ba4).